A 314-amino-acid chain; its full sequence is Ribonuclease Z (314 aa).

7 residues coordinate Zn(2+): His62, His64, Asp66, His67, His139, Asp210, and His268. The Proton acceptor role is filled by Asp66.

The protein belongs to the RNase Z family. Homodimer. It depends on Zn(2+) as a cofactor.

It catalyses the reaction Endonucleolytic cleavage of RNA, removing extra 3' nucleotides from tRNA precursor, generating 3' termini of tRNAs. A 3'-hydroxy group is left at the tRNA terminus and a 5'-phosphoryl group is left at the trailer molecule.. Functionally, zinc phosphodiesterase, which displays some tRNA 3'-processing endonuclease activity. Probably involved in tRNA maturation, by removing a 3'-trailer from precursor tRNA. This is Ribonuclease Z from Rippkaea orientalis (strain PCC 8801 / RF-1) (Cyanothece sp. (strain PCC 8801)).